A 356-amino-acid polypeptide reads, in one-letter code: uncharacterized protein (356 aa).

The next 6 helical transmembrane spans lie at 2-22 (IESI…FHRL), 35-55 (GYVT…PIPF), 76-96 (NMGY…FAFG), 99-119 (LLYG…GPFL), 124-144 (IVAL…LSIF), and 152-172 (EIAF…ITFV). Residues 218–353 (ESLALLLIDI…GRNQVMFNPI (136 aa)) form the GGDEF domain.

Its subcellular location is the cell membrane. This is an uncharacterized protein from Staphylococcus haemolyticus (strain JCSC1435).